Consider the following 368-residue polypeptide: Heme A synthase (368 aa).

A run of 5 helical transmembrane segments spans residues 14 to 34 (AVRI…LVGG), 104 to 124 (VIGI…AIGP), 129 to 149 (ALWI…WMVA), 161 to 181 (VRLA…VWTL), and 200 to 220 (ALAL…VAGL). His-264 is a binding site for heme. A run of 3 helical transmembrane segments spans residues 266–283 (MLAY…IDAL), 296–316 (FLAL…AAPI), and 318–338 (LALV…LQAE). Position 322 (His-322) interacts with heme.

Belongs to the COX15/CtaA family. Type 2 subfamily. Interacts with CtaB. It depends on heme b as a cofactor.

Its subcellular location is the cell membrane. It carries out the reaction Fe(II)-heme o + 2 A + H2O = Fe(II)-heme a + 2 AH2. Its pathway is porphyrin-containing compound metabolism; heme A biosynthesis; heme A from heme O: step 1/1. Its function is as follows. Catalyzes the conversion of heme O to heme A by two successive hydroxylations of the methyl group at C8. The first hydroxylation forms heme I, the second hydroxylation results in an unstable dihydroxymethyl group, which spontaneously dehydrates, resulting in the formyl group of heme A. The polypeptide is Heme A synthase (Rhodopseudomonas palustris (strain ATCC BAA-98 / CGA009)).